We begin with the raw amino-acid sequence, 1081 residues long: DNA-directed RNA polymerase subunit beta (1081 aa).

This sequence belongs to the RNA polymerase beta chain family. In terms of assembly, in plastids the minimal PEP RNA polymerase catalytic core is composed of four subunits: alpha, beta, beta', and beta''. When a (nuclear-encoded) sigma factor is associated with the core the holoenzyme is formed, which can initiate transcription.

The protein resides in the plastid. It localises to the chloroplast. It carries out the reaction RNA(n) + a ribonucleoside 5'-triphosphate = RNA(n+1) + diphosphate. In terms of biological role, DNA-dependent RNA polymerase catalyzes the transcription of DNA into RNA using the four ribonucleoside triphosphates as substrates. The chain is DNA-directed RNA polymerase subunit beta from Cyanidium caldarium (Red alga).